The following is a 374-amino-acid chain: CMP-N-acetylneuraminate-beta-1,4-galactoside alpha-2,3-sialyltransferase (374 aa).

Residues M1–R8 lie on the Cytoplasmic side of the membrane. A helical; Signal-anchor for type II membrane protein membrane pass occupies residues N9–W28. Residues K29–I374 lie on the Lumenal side of the membrane. N79 and N170 each carry an N-linked (GlcNAc...) asparagine glycan. C159 and C313 form a disulfide bridge.

The protein belongs to the glycosyltransferase 29 family. Found in all tissues tested. High expression found in brain, liver, kidney, colon, heart and spleen.

It localises to the membrane. Its subcellular location is the golgi apparatus. The protein localises to the golgi stack membrane. The catalysed reaction is a beta-D-galactosyl-(1-&gt;4)-N-acetyl-beta-D-glucosaminyl derivative + CMP-N-acetyl-beta-neuraminate = an N-acetyl-alpha-neuraminyl-(2-&gt;3)-beta-D-galactosyl-(1-&gt;4)-N-acetyl-beta-D-glucosaminyl derivative + CMP + H(+). It participates in protein modification; protein glycosylation. Its function is as follows. Catalyzes the formation of the NeuAc-alpha-2,3-Gal-beta-1,4-GlcNAc-, NeuAc-alpha-2,3-Gal-beta-1,3-GlcNAc- and NeuAc-alpha-2,3-Gal-beta-1,3-GalNAc- sequences found in terminal carbohydrate groups of glycoproteins and glycolipids. The highest activity is toward Gal-beta-1,3-GlcNAc and the lowest toward Gal-beta-1,3-GalNAc. The sequence is that of CMP-N-acetylneuraminate-beta-1,4-galactoside alpha-2,3-sialyltransferase (St3gal3) from Mus musculus (Mouse).